The sequence spans 172 residues: Shikimate kinase (172 aa).

Position 14–19 (14–19) interacts with ATP; the sequence is GAGKST. Ser18 contributes to the Mg(2+) binding site. Substrate is bound by residues Asp36, Arg60, and Gly82. An ATP-binding site is contributed by Arg120. Residue Arg139 coordinates substrate. Gln156 contacts ATP.

Belongs to the shikimate kinase family. Monomer. Requires Mg(2+) as cofactor.

It is found in the cytoplasm. It carries out the reaction shikimate + ATP = 3-phosphoshikimate + ADP + H(+). The protein operates within metabolic intermediate biosynthesis; chorismate biosynthesis; chorismate from D-erythrose 4-phosphate and phosphoenolpyruvate: step 5/7. In terms of biological role, catalyzes the specific phosphorylation of the 3-hydroxyl group of shikimic acid using ATP as a cosubstrate. This Vibrio campbellii (strain ATCC BAA-1116) protein is Shikimate kinase.